The following is a 137-amino-acid chain: Large-conductance mechanosensitive channel (137 aa).

2 consecutive transmembrane segments (helical) span residues 10–30 (FAMR…AAFG) and 76–96 (GVFI…FMAI).

This sequence belongs to the MscL family. In terms of assembly, homopentamer.

It localises to the cell inner membrane. In terms of biological role, channel that opens in response to stretch forces in the membrane lipid bilayer. May participate in the regulation of osmotic pressure changes within the cell. This is Large-conductance mechanosensitive channel from Enterobacter sp. (strain 638).